We begin with the raw amino-acid sequence, 479 residues long: Adenosylhomocysteinase (479 aa).

Substrate is bound by residues Thr-56, Asp-134, and Glu-200. 201–203 (TTT) lines the NAD(+) pocket. The substrate site is built by Lys-230 and Asp-234. Residues Asn-235, 264 to 269 (GYGDVG), Glu-287, Asn-322, 343 to 345 (IGH), and Asn-391 each bind NAD(+).

It belongs to the adenosylhomocysteinase family. In terms of assembly, homotetramer. It depends on NAD(+) as a cofactor.

It carries out the reaction S-adenosyl-L-homocysteine + H2O = L-homocysteine + adenosine. It participates in amino-acid biosynthesis; L-homocysteine biosynthesis; L-homocysteine from S-adenosyl-L-homocysteine: step 1/1. Adenosylhomocysteine is a competitive inhibitor of S-adenosyl-L-methionine-dependent methyl transferase reactions; therefore adenosylhomocysteinase may play a key role in the control of methylations via regulation of the intracellular concentration of adenosylhomocysteine. The polypeptide is Adenosylhomocysteinase (Plasmodium falciparum (isolate 3D7)).